A 354-amino-acid polypeptide reads, in one-letter code: Guanine nucleotide-binding protein G(i) subunit alpha-1 (354 aa).

Glycine 2 carries the N-myristoyl glycine lipid modification. Cysteine 3 is lipidated: S-palmitoyl cysteine. A G-alpha domain is found at 32 to 354 (REVKLLLLGA…KNNLKDCGLF (323 aa)). The interval 35-48 (KLLLLGAGESGKST) is G1 motif. GTP contacts are provided by residues 43 to 48 (ESGKST), 150 to 151 (DS), and 175 to 178 (LRTR). Residue serine 47 coordinates Mg(2+). The tract at residues 173 to 181 (DVLRTRVKT) is G2 motif. Position 181 (threonine 181) interacts with Mg(2+). The tract at residues 196–205 (FKMFDVGGQR) is G3 motif. GTP contacts are provided by residues 200–204 (DVGGQ), 269–272 (NKKD), and alanine 326. The interval 265–272 (ILFLNKKD) is G4 motif. The segment at 324-329 (TCATDT) is G5 motif.

This sequence belongs to the G-alpha family. G(i/o/t/z) subfamily. In terms of assembly, heterotrimeric G proteins are composed of 3 units; alpha, beta and gamma. The alpha chain contains the guanine nucleotide binding site. Part of a spindle orientation complex at least composed of GNAI1, GPSM2 and NUMA1. Identified in complex with the beta subunit GNB1 and the gamma subunit GNG1. Identified in complex with the beta subunit GNB1 and the gamma subunit GNG2. Component of the TAS2R14-GNAI1 complex, consisting of TAS2R14, GNAI1, GNB1 and GNG2; within the complex interacts with TAS2R14; this complex plays a role in the perception of bitterness. GTP binding causes dissociation of the heterotrimer, liberating the individual subunits so that they can interact with downstream effector proteins. Interacts (GDP-bound form) with GPSM1; this inhibits guanine nucleotide exchange and GTP binding. Interacts (GDP-bound form) with GPSM2 (via GoLoco domains); this inhibits guanine nucleotide exchange. Interacts with RGS10; this strongly enhances GTP hydrolysis. Interacts with RGS1 and RGS16; this strongly enhances GTPase activity. Interacts with RGS4. Interacts with RGS12. Interacts (via active GTP- or inactive GDP-bound forms) with RGS14 (via RGS and GoLoco domains). Interacts with RGS3, RGS6, RGS7, RGS8, RGS17, RGS18 and RGS20 (in vitro). Interacts (GDP-bound form) with RIC8A (via C-terminus); promoting GNAI1 folding and association with the plasma membrane. Interacts (inactive GDP-bound form) with NUCB1 (via GBA motif); the interaction leads to activation of GNAI1. Interacts (inactive GDP-bound form) with CCDC88C/DAPLE (via GBA motif); the interaction leads to activation of GNAI1. Interacts (inactive GDP-bound form) with CCDC8A/GIV (via GBA motif). Post-translationally, myristoylation at Gly-2 is required for membrane anchoring before palmitoylation. In terms of processing, palmitoylation at Cys-3 varies with membrane lipid composition.

It is found in the nucleus. Its subcellular location is the cytoplasm. It localises to the cell membrane. The protein resides in the cytoskeleton. The protein localises to the microtubule organizing center. It is found in the centrosome. Its subcellular location is the cell cortex. It localises to the membrane. It catalyses the reaction GTP + H2O = GDP + phosphate + H(+). Functionally, guanine nucleotide-binding proteins (G proteins) function as transducers downstream of G protein-coupled receptors (GPCRs) in numerous signaling cascades. The alpha chain contains the guanine nucleotide binding site and alternates between an active, GTP-bound state and an inactive, GDP-bound state. Signaling by an activated GPCR promotes GDP release and GTP binding. The alpha subunit has a low GTPase activity that converts bound GTP to GDP, thereby terminating the signal. Both GDP release and GTP hydrolysis are modulated by numerous regulatory proteins. Signaling is mediated via effector proteins, such as adenylate cyclase. Inhibits adenylate cyclase activity of ADCY1, ADCY5 and ADCY6, leading to decreased intracellular cAMP levels. The inactive GDP-bound form prevents the association of RGS14 with centrosomes and is required for the translocation of RGS14 from the cytoplasm to the plasma membrane. Required for normal cytokinesis during mitosis. Required for cortical dynein-dynactin complex recruitment during metaphase. The chain is Guanine nucleotide-binding protein G(i) subunit alpha-1 (GNAI1) from Bos taurus (Bovine).